Reading from the N-terminus, the 290-residue chain is Nucleoid occlusion protein (290 aa).

The segment at residues 153 to 172 (EALAQRLGKGQSTIANKLRL) is a DNA-binding region (H-T-H motif).

It belongs to the ParB family.

The protein localises to the cytoplasm. It is found in the nucleoid. In terms of biological role, effects nucleoid occlusion by binding relatively nonspecifically to DNA and preventing the assembly of the division machinery in the vicinity of the nucleoid, especially under conditions that disturb the cell cycle. It helps to coordinate cell division and chromosome segregation by preventing the formation of the Z ring through the nucleoid, which would cause chromosome breakage. This Bacillus cereus (strain AH187) protein is Nucleoid occlusion protein.